The sequence spans 495 residues: DNA-directed RNA polymerase subunit alpha (495 aa).

Positions 1 to 301 (MPYIKHIETK…RMLASLQAPP (301 aa)) are alpha N-terminal domain (alpha-NTD). Disordered stretches follow at residues 159–227 (SLVP…EAPH) and 391–495 (QEQV…PEET). Positions 170–237 (PRDPLEPEND…IPSMRDDHMT (68 aa)) are insert. Basic and acidic residues predominate over residues 172–186 (DPLEPENDSKSETKS). 2 stretches are compositionally biased toward polar residues: residues 207–219 (VNAQIIDTDSNST) and 391–403 (QEQVVNQPSSQIA). The alpha C-terminal domain (alpha-CTD) stretch occupies residues 317–495 (AKEIALTPIE…LSSSQNPEET (179 aa)). Residues 417–426 (RPIDSKETRR) are compositionally biased toward basic and acidic residues. A compositionally biased stretch (basic residues) spans 444 to 453 (RKSSKTKVKA). Polar residues-rich tracts occupy residues 464-473 (KSANLQQAEE) and 486-495 (LSSSQNPEET).

This sequence belongs to the RNA polymerase alpha chain family. In plastids the minimal PEP RNA polymerase catalytic core is composed of four subunits: alpha, beta, beta', and beta''. When a (nuclear-encoded) sigma factor is associated with the core the holoenzyme is formed, which can initiate transcription.

It localises to the plastid. The protein localises to the chloroplast. It carries out the reaction RNA(n) + a ribonucleoside 5'-triphosphate = RNA(n+1) + diphosphate. DNA-dependent RNA polymerase catalyzes the transcription of DNA into RNA using the four ribonucleoside triphosphates as substrates. The polypeptide is DNA-directed RNA polymerase subunit alpha (Nephroselmis olivacea (Green alga)).